Consider the following 424-residue polypeptide: Probable biofilm formation methyltransferase WspC (424 aa).

The CheR-type methyltransferase domain maps to 1-263 (MNEQRFFRFL…IAQSFAYVRH (263 aa)). S-adenosyl-L-methionine is bound by residues Thr-68, Arg-72, Glu-109, Asp-133, 187-188 (NV), and 206-207 (RN). One copy of the TPR repeat lies at 355–388 (AQVYYWLGLLSDTEGDAQQALSHYRKALYLEPQH).

Monomer. The TPR repeat does not mediate self-association.

Its function is as follows. Involved in biofilm formation. This chain is Probable biofilm formation methyltransferase WspC (wspC), found in Pseudomonas putida (strain ATCC 47054 / DSM 6125 / CFBP 8728 / NCIMB 11950 / KT2440).